Consider the following 204-residue polypeptide: 3-isopropylmalate dehydratase small subunit (204 aa).

The protein belongs to the LeuD family. LeuD type 1 subfamily. Heterodimer of LeuC and LeuD.

It catalyses the reaction (2R,3S)-3-isopropylmalate = (2S)-2-isopropylmalate. It participates in amino-acid biosynthesis; L-leucine biosynthesis; L-leucine from 3-methyl-2-oxobutanoate: step 2/4. Catalyzes the isomerization between 2-isopropylmalate and 3-isopropylmalate, via the formation of 2-isopropylmaleate. This Clavibacter michiganensis subsp. michiganensis (strain NCPPB 382) protein is 3-isopropylmalate dehydratase small subunit.